Reading from the N-terminus, the 472-residue chain is ATP synthase subunit beta (472 aa).

149–156 (GGAGVGKT) provides a ligand contact to ATP.

Belongs to the ATPase alpha/beta chains family. As to quaternary structure, F-type ATPases have 2 components, CF(1) - the catalytic core - and CF(0) - the membrane proton channel. CF(1) has five subunits: alpha(3), beta(3), gamma(1), delta(1), epsilon(1). CF(0) has three main subunits: a(1), b(2) and c(9-12). The alpha and beta chains form an alternating ring which encloses part of the gamma chain. CF(1) is attached to CF(0) by a central stalk formed by the gamma and epsilon chains, while a peripheral stalk is formed by the delta and b chains.

It is found in the cell inner membrane. The enzyme catalyses ATP + H2O + 4 H(+)(in) = ADP + phosphate + 5 H(+)(out). Its function is as follows. Produces ATP from ADP in the presence of a proton gradient across the membrane. The catalytic sites are hosted primarily by the beta subunits. The chain is ATP synthase subunit beta from Pelagibacter ubique (strain HTCC1062).